The sequence spans 140 residues: Protein E6 (140 aa).

2 zinc fingers span residues 27–63 and 100–136; these read CIFCSHTVDLQDLASFYLKKLSLVFRGGCYYACCSEC and CICCLRLLDIVEKLDLLYSDQACYLIRGLWRGYCRNC.

Belongs to the papillomaviridae E6 protein family. Forms homodimers. Interacts with ubiquitin-protein ligase UBE3A/E6-AP; this interaction stimulates UBE3A ubiquitin activity. Interacts with host BAK1.

The protein resides in the host cytoplasm. The protein localises to the host nucleus. Plays a major role in the induction and maintenance of cellular transformation. E6 associates with host UBE3A/E6-AP ubiquitin-protein ligase and modulates its activity. Protects host keratinocytes from apoptosis by mediating the degradation of host BAK1. May also inhibit host immune response. This Human papillomavirus 65 protein is Protein E6.